Here is a 232-residue protein sequence, read N- to C-terminus: Large ribosomal subunit protein uL1 (232 aa).

It belongs to the universal ribosomal protein uL1 family. As to quaternary structure, part of the 50S ribosomal subunit.

Binds directly to 23S rRNA. The L1 stalk is quite mobile in the ribosome, and is involved in E site tRNA release. In terms of biological role, protein L1 is also a translational repressor protein, it controls the translation of the L11 operon by binding to its mRNA. The chain is Large ribosomal subunit protein uL1 from Xanthobacter autotrophicus (strain ATCC BAA-1158 / Py2).